The sequence spans 149 residues: Calmodulin-2 (149 aa).

4 EF-hand domains span residues 8–43 (DQIS…LGQN), 44–79 (PTEA…KMKD), 81–116 (DSEE…LGEK), and 117–149 (LTDE…MMAK). Ca(2+)-binding residues include aspartate 21, aspartate 23, aspartate 25, cysteine 27, glutamate 32, aspartate 57, aspartate 59, asparagine 61, threonine 63, glutamate 68, aspartate 94, aspartate 96, asparagine 98, glutamate 105, aspartate 130, aspartate 132, aspartate 134, glutamine 136, and glutamate 141.

The protein belongs to the calmodulin family. As to quaternary structure, interacts with KCBP and CIP111. Binds to IQD1 and IQD20.

It localises to the cytoplasm. It is found in the cytoskeleton. In terms of biological role, calmodulin mediates the control of a large number of enzymes, ion channels and other proteins by Ca(2+). Among the enzymes to be stimulated by the calmodulin-Ca(2+) complex are a number of protein kinases and phosphatases. The polypeptide is Calmodulin-2 (CAM2) (Arabidopsis thaliana (Mouse-ear cress)).